Here is a 418-residue protein sequence, read N- to C-terminus: tRNA(Met) cytidine acetate ligase (418 aa).

ATP is bound by residues Gly-95, Asn-161, and Arg-186.

The protein belongs to the TmcAL family.

It localises to the cytoplasm. The enzyme catalyses cytidine(34) in elongator tRNA(Met) + acetate + ATP = N(4)-acetylcytidine(34) in elongator tRNA(Met) + AMP + diphosphate. Catalyzes the formation of N(4)-acetylcytidine (ac(4)C) at the wobble position of elongator tRNA(Met), using acetate and ATP as substrates. First activates an acetate ion to form acetyladenylate (Ac-AMP) and then transfers the acetyl group to tRNA to form ac(4)C34. This is tRNA(Met) cytidine acetate ligase from Thermotoga petrophila (strain ATCC BAA-488 / DSM 13995 / JCM 10881 / RKU-1).